We begin with the raw amino-acid sequence, 169 residues long: Large ribosomal subunit protein uL10 (169 aa).

Belongs to the universal ribosomal protein uL10 family. As to quaternary structure, part of the 50S ribosomal subunit.

In Deinococcus radiodurans (strain ATCC 13939 / DSM 20539 / JCM 16871 / CCUG 27074 / LMG 4051 / NBRC 15346 / NCIMB 9279 / VKM B-1422 / R1), this protein is Large ribosomal subunit protein uL10 (rplJ).